Consider the following 107-residue polypeptide: Probable monothiol glutaredoxin 2 (107 aa).

The Glutaredoxin domain occupies 7–107; it reads LEFIQNAIKK…LEKMLKDVVV (101 aa). Glutathione is bound at residue lysine 24. A [2Fe-2S] cluster-binding site is contributed by cysteine 32. Glutathione-binding positions include arginine 61, phenylalanine 73, and 86-87; that span reads CD.

Belongs to the glutaredoxin family. Monothiol subfamily.

This is Probable monothiol glutaredoxin 2 (grxC2) from Rickettsia prowazekii (strain Madrid E).